The following is a 111-amino-acid chain: Putative G antigen family E member 3 (111 aa).

A disordered region spans residues 1–67 (MSEHVRTRSQ…EGAPAVQGPD (67 aa)). Residues 8 to 24 (RSQSSERGNDQESSQPV) are compositionally biased toward polar residues. Thr97 carries the post-translational modification Phosphothreonine.

Belongs to the GAGE family.

The protein is Putative G antigen family E member 3 (PAGE2B) of Homo sapiens (Human).